A 1420-amino-acid chain; its full sequence is MSSDASTYRLEDVLSSFYRVEKIKKINYHQYISKAQNDQWSIQMEFMLRKQDPKTLVALLSRDLWCFSINDDPVPTPPAIEHKPVSPDKIGTFTADYSKPNLPPHYALFLKALRRKIYINLALGSHNKLIQFGNACISLSGVPNYLVQLEPHLFVNGDLTVSLCAKNMGLVPMKEENLEESFLSKHALYLAPSGIRMHLAPASKQGYLITPPKHTELLLTTLSVSHGINLQNKKNLKWVAVVPDLGHLNGHTPTIASYLTPLLEAKKLVWPLHLIFAQPVADIENSTSGDPSEFHCLQDALDAIDDFIQLKQTAAYRTPGSSGVLSSNIAGTNPLSSDGAYTEQFQHYKNNSISSQPASYHSVQETNKISPKDFSPNFTGIDKLMLSPSDQFAPAFLNTPNNNINENELFNDRKQTTVSNDLENSPLKTELEANGRSLEKVNNSVSKTGSVDTLHNKEGTLEQREQNENLPSDKSDSMVDKELFGEDEDEDLFGDSNKSNSTNESNKSISDEITEDMFEMSDEEENNNNKSINKNNKEMHTDLGKDIPFFPSSEKPNIRTMSGTTKRLNGKRKYLDIPIDEMTLPTSPLYMDPGAPLPVETPRDRRKSVFAPLNFNPIIENNVDNKYKSGGKFSFSPLQKEEALNFDISMADLSSSEEEEDEEENGSSDEDLKSLNVRDDMKPSDNISTNTNIHEPQYINYSSIPSLQDSIIKQENFNSVNDANITSNKEGFNSIWKIPQNDIPQTESPLKTVDSSIQPIESNIKMTLEDNNVTSNPSEFTPNMVNSEISNLPKDKSGIPEFTPADPNLSFESSSSLPFLLRHMPLASIPDIFITPTPVVTISEKEQDILDLIAEQVVTDYNILGNLGIPKIAYRGVKDCQEGLITTTMLQLFSTFDRLNGNDTISKFYNMKQPYVFVKKHHELIKVKHDSQPFIKFLNFRPPNGIKNFKSLLLSSSFKEDCLSFAPTLSQTYINQELGFCELLKLTNEDPPGLMYLKAFDKNKLLLLAAQIVSYCSNNKNSIKNVPPILIILPLDNATLTELVDKANIFQVIKNEVCAKMPNIELYLKVIPMDFIRNVLVTVDQYVNVAISIYNMLPPKSVKFTHIAHTLPEKVNFRTMQQQQMQQQQQQQQQQQNNSTGSSSIIYYDSYIHLAYSRSVDKEWVFAALSDSYGQGSMTKTWYVGNSRGKFDDACNQIWNIALNLASKKFGKICLILTRLNGILPDDELMNWRRLSGRNIHLAVVCVDDNSKISFIDEDKLYPSFKPIYKDTRFGGRMDMTRLYDYEIRDIDQDIHGIVFQHPFPLAHSQHRCAIRSGALIKFKKCDGDTVWDKFAVNLLNCPHSDSTQLLETILEEFRNLAALNVWYGLSDGEDGHIPWHILAVKKMMNTLVHTRVKIANTSAATVHTATSSSIILSDK.

Phosphoserine occurs at positions 370, 375, and 425. Polar residues predominate over residues 416-427 (TTVSNDLENSPL). The tract at residues 416 to 511 (TTVSNDLENS…TNESNKSISD (96 aa)) is disordered. Positions 429-439 (TELEANGRSLE) are enriched in basic and acidic residues. Polar residues predominate over residues 440–453 (KVNNSVSKTGSVDT). Over residues 454–484 (LHNKEGTLEQREQNENLPSDKSDSMVDKELF) the composition is skewed to basic and acidic residues. Over residues 494–508 (GDSNKSNSTNESNKS) the composition is skewed to low complexity. T601 carries the post-translational modification Phosphothreonine. S608 bears the Phosphoserine; by PKA mark. Phosphoserine is present on S636. The interval 653-691 (LSSSEEEEDEEENGSSDEDLKSLNVRDDMKPSDNISTNT) is disordered. A compositionally biased stretch (acidic residues) spans 655-669 (SSEEEEDEEENGSSD). Over residues 670–683 (EDLKSLNVRDDMKP) the composition is skewed to basic and acidic residues. Residue S748 is modified to Phosphoserine.

It belongs to the Mediator complex subunit 13 family. Component of the SRB8-11 complex which consists of SRB8, SSN2/SRB9, SSN3/SRB10 and SSN8/SRB11. The SRB8-11 complex associates with the Mediator complex. The SSN3/SRB10 and SSN8/SRB11 kinase-cyclin pair also associate with the RNA polymerase II holoenzyme. Post-translationally, phosphorylated. PKA-dependent phosphorylation at 'Ser-608' is enhanced by activation of the RAS signaling pathway.

Its subcellular location is the nucleus. In terms of biological role, component of the SRB8-11 complex. The SRB8-11 complex is a regulatory module of the Mediator complex which is itself involved in regulation of basal and activated RNA polymerase II-dependent transcription. The SRB8-11 complex may be involved in the transcriptional repression of a subset of genes regulated by Mediator. It may inhibit the association of the Mediator complex with RNA polymerase II to form the holoenzyme complex. The SRB8-11 complex phosphorylates the C-terminal domain (CTD) of the largest subunit of RNA polymerase II RPB1 at serines 2 and 5. This Saccharomyces cerevisiae (strain ATCC 204508 / S288c) (Baker's yeast) protein is Mediator of RNA polymerase II transcription subunit 13 (SSN2).